The following is a 753-amino-acid chain: Synaptotagmin-like protein 5 (753 aa).

The 117-residue stretch at phenylalanine 7–glutamate 123 folds into the RabBD domain. The FYVE-type zinc finger occupies cysteine 64 to cysteine 106. Disordered regions lie at residues arginine 145–histidine 279, leucine 297–leucine 359, and leucine 380–alanine 404. A Phosphoserine modification is found at serine 147. Over residues serine 150–glutamine 174 the composition is skewed to polar residues. Over residues threonine 195–serine 206 the composition is skewed to basic and acidic residues. Residues leucine 214–lysine 223 show a composition bias toward polar residues. Positions serine 224–aspartate 237 are enriched in low complexity. Polar residues predominate over residues lysine 249–asparagine 275. Positions leucine 380–glycine 391 are enriched in polar residues. 2 C2 domains span residues valine 429 to phenylalanine 550 and lysine 597 to methionine 717.

Binds RAB27A that has been activated by GTP-binding.

It localises to the membrane. Functionally, may act as Rab effector protein and play a role in vesicle trafficking. Binds phospholipids. The chain is Synaptotagmin-like protein 5 (Sytl5) from Mus musculus (Mouse).